Here is a 311-residue protein sequence, read N- to C-terminus: tRNA dimethylallyltransferase (311 aa).

An ATP-binding site is contributed by 12–19 (GPTASGKT). Substrate is bound at residue 14-19 (TASGKT). 3 interaction with substrate tRNA regions span residues 37 to 40 (DSAL), 161 to 165 (QRINR), and 241 to 246 (RCVGYR).

This sequence belongs to the IPP transferase family. In terms of assembly, monomer. Requires Mg(2+) as cofactor.

The enzyme catalyses adenosine(37) in tRNA + dimethylallyl diphosphate = N(6)-dimethylallyladenosine(37) in tRNA + diphosphate. Its function is as follows. Catalyzes the transfer of a dimethylallyl group onto the adenine at position 37 in tRNAs that read codons beginning with uridine, leading to the formation of N6-(dimethylallyl)adenosine (i(6)A). The polypeptide is tRNA dimethylallyltransferase (Histophilus somni (strain 2336) (Haemophilus somnus)).